A 748-amino-acid polypeptide reads, in one-letter code: MVLLRVLILLLSWVAGLGGQYGNPLNKYIRHYEGLSYDVDSLHQKHQRAKRAVSHEDQFLRLDFHAHGRHFNLRMKRDTSLFSEEFRVETSNAVLDYDTSHIYTGHIYGEEGSFSHGSVIDGRFEGFIQTHGGTFYVEPAERYIKDRTLPFHSVIYHEDDIKYPHKYGPQGGCADHSVFERMRKYQMTGVEEVTQTPQEKHAINGPELLRKKRTTVAEKNTCQLYIQTDHLFFKYYGTREAVIAQISSHVKAIDTIYQTTDFSGIRNISFMVKRIRINTTADEKDPTNPFRFPNIGVEKFLELNSEQNHDDYCLAYVFTDRDFDDGVLGLAWVGAPSGSSGGICEKSKLYSDGKKKSLNTGIITVQNYGSHVPPKVSHITFAHEVGHNFGSPHDSGTECTPGESKNLGQKENGNYIMYARATSGDKLNNNKFSLCSIRNISQVLEKKRNNCFVESGQPICGNGMVEQGEECDCGYSDQCKDECCYDANQPEGKKCKLKPGKQCSPSQGPCCTAHCAFKSKTEKCRDDSDCAKEGICNGITALCPASDPKPNFTDCNRHTQVCINGQCAGSICEKHGLEECTCASSDGKDDKELCHVCCMKKMEPSTCASTGSVQWNKYFLGRTITLQPGSPCNDFRGYCDVFMRCRLVDADGPLARLKKAIFSPELYENIAEWIVAYWWAVLLMGIALIMLMAGFIKICSVHTPSSNPKLPPPKPLPGTLKRRRPPQPIQQPQRQRPRESYQMGHMRR.

An N-terminal signal peptide occupies residues 1 to 19; that stretch reads MVLLRVLILLLSWVAGLGG. The propeptide occupies 20-213; the sequence is QYGNPLNKYI…NGPELLRKKR (194 aa). The Extracellular segment spans residues 20–672; the sequence is QYGNPLNKYI…SPELYENIAE (653 aa). Positions 171–178 match the Cysteine switch motif; sequence GGCADHSV. C173 contacts Zn(2+). Positions 220-456 constitute a Peptidase M12B domain; sequence NTCQLYIQTD…KRNNCFVESG (237 aa). 2 N-linked (GlcNAc...) asparagine glycosylation sites follow: N267 and N278. 16 disulfide bridges follow: C344-C451, C399-C435, C460-C495, C471-C484, C473-C479, C483-C515, C503-C511, C510-C536, C524-C543, C530-C562, C555-C567, C572-C598, C580-C607, C582-C597, C594-C639, and C632-C645. Zn(2+) is bound at residue H383. Residue E384 is part of the active site. Residues H387 and H393 each contribute to the Zn(2+) site. Residue N439 is glycosylated (N-linked (GlcNAc...) asparagine). Residues 457–551 enclose the Disintegrin domain; it reads QPICGNGMVE…LCPASDPKPN (95 aa). N-linked (GlcNAc...) asparagine glycosylation is present at N551. Residues 673 to 696 traverse the membrane as a helical segment; it reads WIVAYWWAVLLMGIALIMLMAGFI. Residues 697-748 are Cytoplasmic-facing; sequence KICSVHTPSSNPKLPPPKPLPGTLKRRRPPQPIQQPQRQRPRESYQMGHMRR. A disordered region spans residues 704 to 748; that stretch reads PSSNPKLPPPKPLPGTLKRRRPPQPIQQPQRQRPRESYQMGHMRR. Residues 708–715 carry the SH3-binding motif; it reads PKLPPPKP. Residue T719 is modified to Phosphothreonine. Positions 722-728 match the SH3-binding motif; the sequence is RRRPPQP. Residues 734 to 748 are interaction with AP2A1, AP2A2 and AP2M1; sequence RQRPRESYQMGHMRR.

Forms a ternary EFNA5-EPHA3-ADAM10 complex mediating EFNA5 extracellular domain shedding by ADAM10 which regulates the EFNA5-EPHA3 complex internalization and function, the cleavage occurs in trans, with ADAM10 and its substrate being on the membranes of opposing cells. Interacts with the clathrin adapter AP2 complex subunits AP2A1, AP2A2, AP2B1, and AP2M1; this interaction facilitates ADAM10 endocytosis from the plasma membrane during long-term potentiation in hippocampal neurons. Forms a ternary complex composed of ADAM10, EPHA4 and CADH1; within the complex, ADAM10 cleaves CADH1 which disrupts adherens junctions. Interacts with EPHA2. Interacts with NGF in a divalent cation-dependent manner. Interacts with TSPAN14; the interaction promotes ADAM10 maturation and cell surface expression. Interacts with TSPAN5, TSPAN10, TSPAN14, TSPAN15, TSPAN17 and TSPAN33; these interactions regulate ADAM10 substrate specificity, endocytosis and turnover. Interacts (via extracellular domain) with TSPAN33 (via extracellular domain) and (via cytoplasmic domain) with AFDN; interaction with TSPAN33 allows the docking of ADAM10 to zonula adherens through a PDZ11-dependent interaction between TSPAN33 and PLEKHA7 while interaction with AFDN locks ADAM10 at zonula adherens. Interacts with DLG1; this interaction recruits ADAM10 to the cell membrane during long-term depression in hippocampal neurons. Interacts (via extracellular domain) with BACE1 (via extracellular domain). Interacts with FAM171A1. It depends on Zn(2+) as a cofactor. In terms of processing, the precursor is cleaved by furin and PCSK7. In terms of tissue distribution, expressed at low level in kidney, spleen, lung, adrenal, heart and peripheral nerve.

The protein resides in the golgi apparatus membrane. It localises to the cell membrane. The protein localises to the cytoplasmic vesicle. Its subcellular location is the clathrin-coated vesicle. It is found in the cell projection. The protein resides in the axon. It localises to the dendrite. The protein localises to the cell junction. Its subcellular location is the adherens junction. It is found in the cytoplasm. It catalyses the reaction Endopeptidase of broad specificity.. Its activity is regulated as follows. Catalytically inactive when the propeptide is intact and associated with the mature enzyme. The disintegrin and cysteine-rich regions modulate access of substrates to exerts an inhibitory effect on the cleavage of ADAM10 substrates. Transmembrane metalloprotease which mediates the ectodomain shedding of a myriad of transmembrane proteins, including adhesion proteins, growth factor precursors and cytokines being essential for development and tissue homeostasis. Associates with six members of the tetraspanin superfamily TspanC8 which regulate its exit from the endoplasmic reticulum and its substrate selectivity. Cleaves the membrane-bound precursor of TNF-alpha at '76-Ala-|-Val-77' to its mature soluble form. Responsible for the proteolytical release of soluble JAM3 from endothelial cells surface. Responsible for the proteolytic release of several other cell-surface proteins, including heparin-binding epidermal growth-like factor, ephrin-A2, CD44, CDH2 and for constitutive and regulated alpha-secretase cleavage of amyloid precursor protein (APP). Contributes to the normal cleavage of the cellular prion protein. Involved in the cleavage of the adhesion molecule L1 at the cell surface and in released membrane vesicles, suggesting a vesicle-based protease activity. Also controls the proteolytic processing of Notch and mediates lateral inhibition during neurogenesis. Required for the development of type 1 transitional B cells into marginal zone B cells, probably by cleaving Notch. Responsible for the FasL ectodomain shedding and for the generation of the remnant ADAM10-processed FasL (FasL APL) transmembrane form. Also cleaves the ectodomain of the integral membrane proteins CORIN and ITM2B. Mediates the proteolytic cleavage of LAG3, leading to release the secreted form of LAG3. Mediates the proteolytic cleavage of IL6R and IL11RA, leading to the release of secreted forms of IL6R and IL11RA. Enhances the cleavage of CHL1 by BACE1. Cleaves NRCAM. Cleaves TREM2, resulting in shedding of the TREM2 ectodomain. Involved in the development and maturation of glomerular and coronary vasculature. During development of the cochlear organ of Corti, promotes pillar cell separation by forming a ternary complex with CADH1 and EPHA4 and cleaving CADH1 at adherens junctions. May regulate the EFNA5-EPHA3 signaling. Regulates leukocyte transmigration as a sheddase for the adherens junction protein VE-cadherin/CDH5 in endothelial cells. The protein is Disintegrin and metalloproteinase domain-containing protein 10 (ADAM10) of Bos taurus (Bovine).